Here is an 86-residue protein sequence, read N- to C-terminus: Small ribosomal subunit protein bS16 (86 aa).

The protein belongs to the bacterial ribosomal protein bS16 family.

The sequence is that of Small ribosomal subunit protein bS16 from Syntrophotalea carbinolica (strain DSM 2380 / NBRC 103641 / GraBd1) (Pelobacter carbinolicus).